Consider the following 264-residue polypeptide: MRADVVTIFPAYLEPLRLSLVGRAQERGTLEVRTHDLRAWTSDVHRTVDDAPYGGGPGMVMRPEPWDAALSEIAASDPARRPRVVVPTPAGRPFSQRHAEELAQEPWLVFCCGRYEGIDARVIETWADDEISIGDYVLAGGEVATLVILEAVARLLPGVLGNSASAADDSFSDGLLEAPAYTRPQVWRGVEVPAVLRSGDHAAVARWRRAQALRRTVARRPDLVAQAELSDADRAVLDAVAAEVQQAATPGGQRRPPWHRDSRA.

Residues Gly-113 and 133–138 (IGDYVL) each bind S-adenosyl-L-methionine. A disordered region spans residues 244–264 (VQQAATPGGQRRPPWHRDSRA).

This sequence belongs to the RNA methyltransferase TrmD family. Homodimer.

Its subcellular location is the cytoplasm. The catalysed reaction is guanosine(37) in tRNA + S-adenosyl-L-methionine = N(1)-methylguanosine(37) in tRNA + S-adenosyl-L-homocysteine + H(+). Its function is as follows. Specifically methylates guanosine-37 in various tRNAs. This Frankia alni (strain DSM 45986 / CECT 9034 / ACN14a) protein is tRNA (guanine-N(1)-)-methyltransferase.